The following is a 554-amino-acid chain: Chaperonin GroEL (554 aa).

ATP is bound by residues 29 to 32, Lys50, 86 to 90, Gly414, and Asp495; these read TLGP and DGTTT.

It belongs to the chaperonin (HSP60) family. As to quaternary structure, forms a cylinder of 14 subunits composed of two heptameric rings stacked back-to-back. Interacts with the co-chaperonin GroES.

The protein resides in the cytoplasm. It catalyses the reaction ATP + H2O + a folded polypeptide = ADP + phosphate + an unfolded polypeptide.. In terms of biological role, together with its co-chaperonin GroES, plays an essential role in assisting protein folding. The GroEL-GroES system forms a nano-cage that allows encapsulation of the non-native substrate proteins and provides a physical environment optimized to promote and accelerate protein folding. The protein is Chaperonin GroEL of Pelagibacter ubique (strain HTCC1062).